The primary structure comprises 229 residues: Ribosomal RNA small subunit methyltransferase G (229 aa).

Residues Gly87, Leu92, 138–139 (VE), and Arg154 each bind S-adenosyl-L-methionine.

The protein belongs to the methyltransferase superfamily. RNA methyltransferase RsmG family.

It is found in the cytoplasm. It carries out the reaction guanosine(527) in 16S rRNA + S-adenosyl-L-methionine = N(7)-methylguanosine(527) in 16S rRNA + S-adenosyl-L-homocysteine. Specifically methylates the N7 position of guanine in position 527 of 16S rRNA. The sequence is that of Ribosomal RNA small subunit methyltransferase G from Oleidesulfovibrio alaskensis (strain ATCC BAA-1058 / DSM 17464 / G20) (Desulfovibrio alaskensis).